A 243-amino-acid chain; its full sequence is ABC transporter arginine-binding protein 1 (243 aa).

The signal sequence occupies residues 1–19; the sequence is MKKLVLAALLASFTFGASA.

The protein belongs to the bacterial solute-binding protein 3 family. In terms of assembly, the complex is composed of two ATP-binding proteins (ArtP), two transmembrane proteins (ArtM and ArtQ) and two solute-binding proteins (ArtJ and ArtI).

The protein localises to the periplasm. Part of the ABC transporter complex ArtPIQMJ involved in arginine transport. Binds L-arginine with high affinity. The chain is ABC transporter arginine-binding protein 1 (artJ) from Escherichia coli (strain K12).